The following is a 259-amino-acid chain: Phosphatidylglycerol--prolipoprotein diacylglyceryl transferase (259 aa).

Transmembrane regions (helical) follow at residues 9-29, 47-67, 83-103, and 109-129; these read IGPF…VLAV, IDFI…YYVI, IWNG…VLFI, and VLNP…AQAI. An a 1,2-diacyl-sn-glycero-3-phospho-(1'-sn-glycerol)-binding site is contributed by Arg131. The next 3 membrane-spanning stretches (helical) occupy residues 167–187, 194–214, and 227–247; these read MPTF…ICYL, LLEG…RFVI, and LRVS…FVIL.

This sequence belongs to the Lgt family.

It localises to the cell membrane. It catalyses the reaction L-cysteinyl-[prolipoprotein] + a 1,2-diacyl-sn-glycero-3-phospho-(1'-sn-glycerol) = an S-1,2-diacyl-sn-glyceryl-L-cysteinyl-[prolipoprotein] + sn-glycerol 1-phosphate + H(+). It functions in the pathway protein modification; lipoprotein biosynthesis (diacylglyceryl transfer). Catalyzes the transfer of the diacylglyceryl group from phosphatidylglycerol to the sulfhydryl group of the N-terminal cysteine of a prolipoprotein, the first step in the formation of mature lipoproteins. In Streptococcus uberis (strain ATCC BAA-854 / 0140J), this protein is Phosphatidylglycerol--prolipoprotein diacylglyceryl transferase.